A 485-amino-acid chain; its full sequence is Two-component response regulator ORR31 (485 aa).

Residues 13 to 138 (RVMPVDGDTK…TMAQLWRVVA (126 aa)) enclose the Response regulatory domain. Asp-66 bears the 4-aspartylphosphate mark. A compositionally biased stretch (polar residues) spans 195–204 (LTINVDSGSS). A disordered region spans residues 195–236 (LTINVDSGSSDGADANPRQKLEHKKDAKGPLGQHVASHLQPQ). Residues 211–222 (PRQKLEHKKDAK) show a composition bias toward basic and acidic residues.

It belongs to the ARR family. Type-B subfamily. Post-translationally, two-component system major event consists of a His-to-Asp phosphorelay between a sensor histidine kinase (HK) and a response regulator (RR). In plants, the His-to-Asp phosphorelay involves an additional intermediate named Histidine-containing phosphotransfer protein (HPt). This multistep phosphorelay consists of a His-Asp-His-Asp sequential transfer of a phosphate group between first a His and an Asp of the HK protein, followed by the transfer to a conserved His of the HPt protein and finally the transfer to an Asp in the receiver domain of the RR protein.

In terms of biological role, functions as a response regulator involved in His-to-Asp phosphorelay signal transduction system. Phosphorylation of the Asp residue in the receiver domain activates the ability of the protein to promote the transcription of target genes. May directly activate some type-A response regulators in response to cytokinins. This chain is Two-component response regulator ORR31, found in Oryza sativa subsp. japonica (Rice).